A 305-amino-acid chain; its full sequence is Superkiller complex protein 8 (305 aa).

7 WD repeats span residues 14–57 (AHED…LEMQ), 62–101 (GHQL…QIRS), 104–143 (AGPV…KEYS), 146–187 (TRGK…HTLE), 188–227 (GHAM…LAAT), 230–269 (GHGS…CVHT), and 272–305 (DHQD…DCPI).

The protein belongs to the SKI8 family. Component of the PAF1 complex. Component of the SKI complex.

It is found in the nucleus. The protein localises to the cytoplasm. Component of the PAF1 complex (PAF1C) which has multiple functions during transcription by RNA polymerase II and is implicated in regulation of development and maintenance of embryonic stem cell pluripotency. PAF1C associates with RNA polymerase II through interaction with POLR2A CTD non-phosphorylated and 'Ser-2'- and 'Ser-5'-phosphorylated forms and is involved in transcriptional elongation, acting both independently and synergistically with TCEA1 and in cooperation with the DSIF complex and HTATSF1. Also acts as a component of the SKI complex, a multiprotein complex that assists the RNA-degrading exosome during the mRNA decay and quality-control pathways. The SKI complex catalyzes mRNA extraction from 80S ribosomal complexes in the 3'-5' direction and channels mRNA to the cytosolic exosome for degradation. The sequence is that of Superkiller complex protein 8 (skic8) from Xenopus laevis (African clawed frog).